Consider the following 219-residue polypeptide: Probable 3-beta-hydroxysteroid-Delta(8),Delta(7)-isomerase (219 aa).

Helical transmembrane passes span 29-49 (ILVPYLATSLFLLLAVWLISG), 62-82 (LMCWWAFTGLTHIIIEGTFVF), 119-139 (VEGITAVLEGPASLLAVYAIA), and 181-201 (FWAYFIGANSSWVVIPTMIAI). Positions 58-200 (TDRWLMCWWA…SWVVIPTMIA (143 aa)) constitute an EXPERA domain.

Belongs to the EBP family.

It is found in the endoplasmic reticulum membrane. It carries out the reaction lathosterol = 5alpha-cholest-8-en-3beta-ol. The protein operates within steroid biosynthesis; sterol biosynthesis. Its function is as follows. Catalyzes the conversion of Delta(8)-sterols to their corresponding Delta(7)-isomers. This chain is Probable 3-beta-hydroxysteroid-Delta(8),Delta(7)-isomerase, found in Oryza sativa subsp. japonica (Rice).